The sequence spans 99 residues: Large ribosomal subunit protein eL30 (99 aa).

This sequence belongs to the eukaryotic ribosomal protein eL30 family.

This chain is Large ribosomal subunit protein eL30 (rpl30e), found in Pyrococcus horikoshii (strain ATCC 700860 / DSM 12428 / JCM 9974 / NBRC 100139 / OT-3).